The following is a 288-amino-acid chain: ATP synthase gamma chain (288 aa).

This sequence belongs to the ATPase gamma chain family. F-type ATPases have 2 components, CF(1) - the catalytic core - and CF(0) - the membrane proton channel. CF(1) has five subunits: alpha(3), beta(3), gamma(1), delta(1), epsilon(1). CF(0) has three main subunits: a, b and c.

The protein localises to the cell inner membrane. Functionally, produces ATP from ADP in the presence of a proton gradient across the membrane. The gamma chain is believed to be important in regulating ATPase activity and the flow of protons through the CF(0) complex. The chain is ATP synthase gamma chain from Rickettsia bellii (strain OSU 85-389).